Here is a 117-residue protein sequence, read N- to C-terminus: Large ribosomal subunit protein uL24 (117 aa).

A compositionally biased stretch (polar residues) spans 1–12 (MSKKNSQTSPQR). Residues 1 to 20 (MSKKNSQTSPQRQKMHVKKG) are disordered.

The protein belongs to the universal ribosomal protein uL24 family. Part of the 50S ribosomal subunit.

One of two assembly initiator proteins, it binds directly to the 5'-end of the 23S rRNA, where it nucleates assembly of the 50S subunit. Its function is as follows. One of the proteins that surrounds the polypeptide exit tunnel on the outside of the subunit. This chain is Large ribosomal subunit protein uL24, found in Microcystis aeruginosa (strain NIES-843 / IAM M-2473).